The primary structure comprises 242 residues: ATP synthase subunit a (242 aa).

Helical transmembrane passes span 29–49 (SSIY…LAFY), 84–104 (FIPL…LGMT), 114–134 (IIVT…VGFV), 140–160 (FLTL…IIVI), 181–201 (MAGH…MIYL), and 203–223 (FLPI…AILQ).

Belongs to the ATPase A chain family. As to quaternary structure, F-type ATPases have 2 components, CF(1) - the catalytic core - and CF(0) - the membrane proton channel. CF(1) has five subunits: alpha(3), beta(3), gamma(1), delta(1), epsilon(1). CF(0) has three main subunits: a(1), b(2) and c(9-12). The alpha and beta chains form an alternating ring which encloses part of the gamma chain. CF(1) is attached to CF(0) by a central stalk formed by the gamma and epsilon chains, while a peripheral stalk is formed by the delta and b chains.

It is found in the cell inner membrane. Key component of the proton channel; it plays a direct role in the translocation of protons across the membrane. This is ATP synthase subunit a from Rickettsia peacockii (strain Rustic).